A 329-amino-acid polypeptide reads, in one-letter code: Methionyl-tRNA formyltransferase (329 aa).

Residue 117 to 120 (SLLP) coordinates (6S)-5,6,7,8-tetrahydrofolate.

It belongs to the Fmt family.

The catalysed reaction is L-methionyl-tRNA(fMet) + (6R)-10-formyltetrahydrofolate = N-formyl-L-methionyl-tRNA(fMet) + (6S)-5,6,7,8-tetrahydrofolate + H(+). In terms of biological role, attaches a formyl group to the free amino group of methionyl-tRNA(fMet). The formyl group appears to play a dual role in the initiator identity of N-formylmethionyl-tRNA by promoting its recognition by IF2 and preventing the misappropriation of this tRNA by the elongation apparatus. This chain is Methionyl-tRNA formyltransferase, found in Paracidovorax citrulli (strain AAC00-1) (Acidovorax citrulli).